The chain runs to 361 residues: Chorismate synthase (361 aa).

NADP(+) is bound by residues Arg48 and Arg54. FMN contacts are provided by residues 125–127, 238–239, Gly278, 293–297, and Arg319; these read RSS, NA, and KPTSS.

This sequence belongs to the chorismate synthase family. Homotetramer. FMNH2 serves as cofactor.

The catalysed reaction is 5-O-(1-carboxyvinyl)-3-phosphoshikimate = chorismate + phosphate. The protein operates within metabolic intermediate biosynthesis; chorismate biosynthesis; chorismate from D-erythrose 4-phosphate and phosphoenolpyruvate: step 7/7. Its function is as follows. Catalyzes the anti-1,4-elimination of the C-3 phosphate and the C-6 proR hydrogen from 5-enolpyruvylshikimate-3-phosphate (EPSP) to yield chorismate, which is the branch point compound that serves as the starting substrate for the three terminal pathways of aromatic amino acid biosynthesis. This reaction introduces a second double bond into the aromatic ring system. This chain is Chorismate synthase, found in Shigella boydii serotype 18 (strain CDC 3083-94 / BS512).